The primary structure comprises 957 residues: Dystrophin-related protein 2 (957 aa).

Spectrin repeat units lie at residues 102–179 (DHSG…EELE) and 231–337 (EHLL…QLQD). One can recognise a WW domain in the interval 358 to 383 (WERAISPNKVPYYINHQAQTTCWDHP). The segment at 605-661 (KHQTKCSICRQCPIKGFRYRSLKQFNVDICQTCFLTGKASKGNKLHYPIMEYYTPTT) adopts a ZZ-type; degenerate zinc-finger fold. 4 residues coordinate Zn(2+): Cys-610, Cys-613, Cys-634, and Cys-637. Ser-748 carries the post-translational modification Phosphoserine. The span at 877-894 (PPTESDGNGSAGSSLASS) shows a compositional bias: low complexity. A disordered region spans residues 877–923 (PPTESDGNGSAGSSLASSPRQSEGSHPREKGQTTPDTEAADDVGSKS). Position 910 is a phosphothreonine (Thr-910).

In terms of assembly, interacts with PRX; this enhances phosphorylation. Identified in a dystroglycan complex that contains at least PRX, DRP2, UTRN, DMD and DAG1. Detected in trigeminal nerve Schwann cells. Detected in brain cortex and hippocampus. Detected in brain membrane fractions and highly enriched in the postsynaptic density (at protein level).

Its subcellular location is the postsynaptic density. The protein resides in the cell projection. It is found in the dendrite. The protein localises to the perikaryon. It localises to the cell membrane. Functionally, required for normal myelination and for normal organization of the cytoplasm and the formation of Cajal bands in myelinating Schwann cells. Required for normal PRX location at appositions between the abaxonal surface of the myelin sheath and the Schwann cell plasma membrane. Possibly involved in membrane-cytoskeleton interactions of the central nervous system. This chain is Dystrophin-related protein 2 (Drp2), found in Rattus norvegicus (Rat).